Consider the following 294-residue polypeptide: Nucleotide-binding protein LCA_0526 (294 aa).

Residue 12-19 (GMSGAGKT) coordinates ATP. Residue 62–65 (DLRS) participates in GTP binding.

This sequence belongs to the RapZ-like family.

Its function is as follows. Displays ATPase and GTPase activities. This Latilactobacillus sakei subsp. sakei (strain 23K) (Lactobacillus sakei subsp. sakei) protein is Nucleotide-binding protein LCA_0526.